We begin with the raw amino-acid sequence, 116 residues long: Small ribosomal subunit protein uS11m (116 aa).

Belongs to the universal ribosomal protein uS11 family.

Its subcellular location is the mitochondrion. This is Small ribosomal subunit protein uS11m (RPS11) from Chondrus crispus (Carrageen Irish moss).